A 325-amino-acid polypeptide reads, in one-letter code: GPI-linked NAD(P)(+)--arginine ADP-ribosyltransferase 1 (325 aa).

A signal peptide spans 1-22 (MKIPAMMSLLLVSVGLRDGVQV). Disulfide bonds link Cys53–Cys272 and Cys169–Cys219. Asn65 carries an N-linked (GlcNAc...) asparagine glycan. The TR mART core domain occupies 73-268 (KVYADGWAQA…IYLRALGKRS (196 aa)). Residues Tyr117 and Arg174 each contribute to the NAD(+) site. Residues Arg174 and Ser197 contribute to the active site. Ser228 is a binding site for NAD(+). Glu235 is an active-site residue. Asn248 carries an N-linked (GlcNAc...) asparagine glycan. The GPI-anchor amidated serine moiety is linked to residue Ser290. Residues 291 to 325 (APGSISASCSLLLLLLFLVLSALPENPGLQQLTRC) constitute a propeptide, removed in mature form.

Belongs to the Arg-specific ADP-ribosyltransferase family. As to expression, abundantly expressed in cardiac and skeletal muscle. Low levels also found in lung.

It is found in the sarcoplasmic reticulum membrane. The catalysed reaction is L-arginyl-[protein] + NAD(+) = N(omega)-(ADP-D-ribosyl)-L-arginyl-[protein] + nicotinamide + H(+). Has ADP-ribosyltransferase activity toward GLP1R. The chain is GPI-linked NAD(P)(+)--arginine ADP-ribosyltransferase 1 (Art1) from Mus musculus (Mouse).